The sequence spans 360 residues: Phospho-N-acetylmuramoyl-pentapeptide-transferase (360 aa).

10 consecutive transmembrane segments (helical) span residues 27-47, 73-93, 94-114, 132-152, 168-188, 199-219, 236-256, 263-283, 288-308, and 338-358; these read IVSLLTALVISLWMGPHMIAW, TMGGVMILVAIIVSVLMWANL, SNPYVWCVLLVLAGYGAVGFV, WKYFWQSVIALVVAFSMYAIG, VMPQLGLLYVALAYFVIVGTS, GLAIMPTVFVAAGFALVAWAT, ASELVIVCTAIVGAGLGFLWF, VFMGDVGSLALGGALGTIAVL, FLLVIMGGVFVVETLSVILQV, and VIVRFWIISLMLVLIGLATLK.

The protein belongs to the glycosyltransferase 4 family. MraY subfamily. The cofactor is Mg(2+).

Its subcellular location is the cell inner membrane. The catalysed reaction is UDP-N-acetyl-alpha-D-muramoyl-L-alanyl-gamma-D-glutamyl-meso-2,6-diaminopimeloyl-D-alanyl-D-alanine + di-trans,octa-cis-undecaprenyl phosphate = di-trans,octa-cis-undecaprenyl diphospho-N-acetyl-alpha-D-muramoyl-L-alanyl-D-glutamyl-meso-2,6-diaminopimeloyl-D-alanyl-D-alanine + UMP. It participates in cell wall biogenesis; peptidoglycan biosynthesis. Functionally, catalyzes the initial step of the lipid cycle reactions in the biosynthesis of the cell wall peptidoglycan: transfers peptidoglycan precursor phospho-MurNAc-pentapeptide from UDP-MurNAc-pentapeptide onto the lipid carrier undecaprenyl phosphate, yielding undecaprenyl-pyrophosphoryl-MurNAc-pentapeptide, known as lipid I. The sequence is that of Phospho-N-acetylmuramoyl-pentapeptide-transferase from Pectobacterium carotovorum subsp. carotovorum (strain PC1).